The chain runs to 751 residues: Serine/threonine-protein kinase B-raf (751 aa).

The segment covering 1–32 (MAALSGGGGSSSGGGGGGGGGGGGGDGGGGAE) has biased composition (gly residues). Residues 1–55 (MAALSGGGGSSSGGGGGGGGGGGGGDGGGGAEQGQALFNGDMEPEAGAGAAASSA) are disordered. Ala-2 is subject to N-acetylalanine. Over residues 46-55 (AGAGAAASSA) the composition is skewed to low complexity. A Phosphoserine modification is found at Ser-135. The region spanning 139–211 (PIVRVFLPNK…TGEELHVEVL (73 aa)) is the RBD domain. Zn(2+) contacts are provided by His-219, Cys-232, Cys-235, Cys-245, Cys-248, His-253, Cys-256, and Cys-264. The interval 288–440 (EASFPETALP…SSDDWEIPDG (153 aa)) is disordered. Over residues 297–324 (PSGSSSAPPSDSTGPQILTSPSPSKSIP) the composition is skewed to low complexity. Ser-316 carries the post-translational modification Phosphoserine. The segment covering 331-346 (PADEDHRNQFGQRDRS) has biased composition (basic and acidic residues). Ser-348 carries the post-translational modification Phosphoserine. Thr-356 is modified (phosphothreonine; by autocatalysis). Phosphothreonine is present on Thr-379. Ser-382 is subject to Phosphoserine. Thr-384 is subject to Phosphothreonine. Residues 406 to 432 (QRERKSSSSSSSEDRSRMKTLGRRDSS) show a composition bias toward basic and acidic residues. Phosphoserine is present on residues Ser-431 and Ser-432. Positions 442 to 702 (ITVGQRIGSG…PQILASIELL (261 aa)) constitute a Protein kinase domain. ATP is bound by residues 448-456 (IGSGSFGTV) and Lys-468. Asp-561 (proton acceptor) is an active-site residue. Lys-563 is covalently cross-linked (Glycyl lysine isopeptide (Lys-Gly) (interchain with G-Cter in ubiquitin)). Omega-N-methylarginine; by PRMT5 is present on Arg-656. 2 positions are modified to phosphoserine: Ser-714 and Ser-735. The residue at position 738 (Thr-738) is a Phosphothreonine; by MAPK1.

Belongs to the protein kinase superfamily. TKL Ser/Thr protein kinase family. RAF subfamily. In terms of assembly, monomer. Homodimer. Heterodimerizes with RAF1, and the heterodimer possesses a highly increased kinase activity compared to the respective homodimers or monomers. Heterodimerization is mitogen-regulated and enhanced by 14-3-3 proteins. MAPK1/ERK2 activation can induce a negative feedback that promotes the dissociation of the heterodimer by phosphorylating BRAF at Thr-738. Heterodimerizes (via N-terminus) with KSR1 (via N-terminus) or KSR2 (via N-terminus) in a MAP2K1-dependent manner. Interacts with MAP2K1 and MAP2K2. Found in a complex with at least BRAF, HRAS, MAP2K1, MAPK3 and RGS14. Interacts with RIT1. Interacts (via N-terminus) with RGS14 (via RBD domains); the interaction mediates the formation of a ternary complex with RAF1, a ternary complex inhibited by GNAI1. Interacts with DGKH. Interacts with PRMT5. Interacts with AKAP13, MAP2K1 and KSR1. Identified in a complex with AKAP13, KSR1 and MAP2K1. Interacts with FNIP1 and FNIP2. Requires Zn(2+) as cofactor. Post-translationally, phosphorylation at Ser-348 by SGK1 inhibits its activity. Dephosphorylation of Ser-348 by the SHOC2-MRAS-PP1c (SMP) complex consisting of SHOC2, GTP-bound M-Ras/MRAS and the catalytic subunit of protein phosphatase 1 (PPP1CA, PPP1CB or PPP1CC); this relieves inactivation and stimulates kinase activity. In terms of processing, methylation by PRMT5 decreases stability and kinase activity. Ubiquitinated by RNF149; which leads to proteasomal degradation. Polyubiquitinated at Lys-615 in response to EGF.

Its subcellular location is the nucleus. The protein resides in the cytoplasm. The protein localises to the cell membrane. It catalyses the reaction L-seryl-[protein] + ATP = O-phospho-L-seryl-[protein] + ADP + H(+). The catalysed reaction is L-threonyl-[protein] + ATP = O-phospho-L-threonyl-[protein] + ADP + H(+). Its activity is regulated as follows. In quiescent cells, maintained in an inactive state via an intramolecular interaction between the protein kinase and N-terminal domains. Following mitogen-mediated cell activation, binds via its RGB domain to active HRAS (GTP-bound) which releases the inhibitory intramolecular interaction between the two domains. This allows the MAP2K1-mediated dimerization of KSR1 or KSR2, and BRAF which activates BRAF. Functionally, involved in the transduction of mitogenic signals from the cell membrane to the nucleus. Phosphorylates MAP2K1, and thereby activates the MAP kinase signal transduction pathway. Phosphorylates PFKFB2. May play a role in the postsynaptic responses of hippocampal neurons. The chain is Serine/threonine-protein kinase B-raf from Mus musculus (Mouse).